The chain runs to 83 residues: Mu-theraphotoxin-Hhn2k (83 aa).

The N-terminal stretch at 1-21 (MKASMFLALAGLVLLFVVDYA) is a signal peptide. The propeptide occupies 22-48 (SESEEKEFPIELLSKIFAVDVFKGEER). 3 disulfide bridges follow: Cys-50–Cys-65, Cys-57–Cys-70, and Cys-64–Cys-77. Leu-81 carries the post-translational modification Leucine amide.

It belongs to the neurotoxin 10 (Hwtx-1) family. 15 (Hntx-3) subfamily. In terms of assembly, monomer. Expressed by the venom gland.

It localises to the secreted. In terms of biological role, lethal neurotoxin. Selectively blocks tetrodotoxin-sensitive voltage-gated sodium channels (Nav). Does not affect tetrodotoxin-resistant voltage-gated sodium channels or calcium channels. This Cyriopagopus hainanus (Chinese bird spider) protein is Mu-theraphotoxin-Hhn2k.